Reading from the N-terminus, the 351-residue chain is Cytosolic sulfotransferase 11 (351 aa).

98 to 103 (KGGTTW) is a 3'-phosphoadenylyl sulfate binding site. Catalysis depends on H163, which acts as the Proton acceptor. 3'-phosphoadenylyl sulfate is bound by residues R184, S192, Y250, and 316–318 (RKG).

This sequence belongs to the sulfotransferase 1 family.

The protein resides in the cytoplasm. Functionally, sulfotransferase that utilizes 3'-phospho-5'-adenylyl sulfate (PAPS) as sulfonate donor. This Arabidopsis thaliana (Mouse-ear cress) protein is Cytosolic sulfotransferase 11 (SOT11).